Reading from the N-terminus, the 1338-residue chain is Centrosomal P4.1-associated protein (1338 aa).

Disordered regions lie at residues 78–99 (QKLE…HTGF) and 190–211 (GLSL…TTTG). Phosphoserine occurs at positions 260 and 317. Positions 320–395 (VANIEERPIK…FTNAKSKFQK (76 aa)) are alpha/beta-tubulin binding. Disordered regions lie at residues 387 to 415 (TNAK…PLFK), 437 to 480 (PILK…QTGK), and 522 to 552 (QGKD…ESES). The segment covering 401 to 410 (LVTNQSTSED) has biased composition (polar residues). Ser-541 bears the Phosphoserine mark. Positions 542-551 (PIRETMKESE) are enriched in basic and acidic residues. 2 positions are modified to phosphoserine; by PLK2: Ser-590 and Ser-596. 3 disordered regions span residues 612–790 (HRMS…LSMS), 846–903 (VKRG…DNAR), and 1088–1158 (TQVE…HPDG). Positions 636–651 (NRSEDLDHTAREKESE) are enriched in basic and acidic residues. Residues 680–690 (QKSTSENQTEW) show a composition bias toward polar residues. Residues 718-765 (STEDRERGISSREDSPQVCDDKGPFKDTRTQEDKRRDVDLDLSDKDYS) are compositionally biased toward basic and acidic residues. Ser-760 is modified (phosphoserine). A compositionally biased stretch (low complexity) spans 781-790 (PSRSSSLSMS). Residues 896 to 1338 (QPPGDNARSQ…EGNVLMDTEL (443 aa)) are interaction with STIL.

This sequence belongs to the TCP10 family. Forms homodimers. Associates with microtubules plus ends; binds to beta-tubulin subunits exposed on microtubule outer surface at its distal tip; also associates with microtubule lattice. Associated with the gamma-tubulin complex. Interacts with the head domain of EPB41. Interacts with LYST. Interacts with CEP152 (via C-terminus). Interacts with STIL. Forms a complex with STIL and SASS6. Post-translationally, phosphorylation at Ser-590 and Ser-596 by PLK2 is required for procentriole formation and centriole elongation. Phosphorylation by PLK2 oscillates during the cell cycle: it increases at G1/S transition and decreases during the exit from mitosis. Phosphorylation at Ser-596 is also mediated by PLK4 but is not a critical step in PLK4 function in procentriole assembly.

The protein resides in the cytoplasm. It localises to the cytoskeleton. Its subcellular location is the microtubule organizing center. It is found in the centrosome. The protein localises to the centriole. Plays an important role in cell division and centrosome function by participating in centriole duplication. Inhibits microtubule nucleation from the centrosome. Involved in the regulation of slow processive growth of centriolar microtubules. Acts as microtubule plus-end tracking protein that stabilizes centriolar microtubules and inhibits microtubule polymerization and extension from the distal ends of centrioles. Required for centriole elongation and for STIL-mediated centriole amplification. Required for the recruitment of CEP295 to the proximal end of new-born centrioles at the centriolar microtubule wall during early S phase in a PLK4-dependent manner. May be involved in the control of centriolar-microtubule growth by acting as a regulator of tubulin release. This Pan troglodytes (Chimpanzee) protein is Centrosomal P4.1-associated protein (CPAP).